We begin with the raw amino-acid sequence, 136 residues long: uncharacterized protein (136 aa).

The N-terminal stretch at 1–19 (MKKLLMVILGIALIGMAYA) is a signal peptide.

This is an uncharacterized protein from Methanocaldococcus jannaschii (strain ATCC 43067 / DSM 2661 / JAL-1 / JCM 10045 / NBRC 100440) (Methanococcus jannaschii).